Here is a 295-residue protein sequence, read N- to C-terminus: UDP-N-acetylenolpyruvoylglucosamine reductase (295 aa).

In terms of domain architecture, FAD-binding PCMH-type spans 26–189; the sequence is VGGQADILFK…IEAEFKGVSS (164 aa). The active site involves Arg169. The Proton donor role is filled by Cys218. Glu288 is a catalytic residue.

It belongs to the MurB family. FAD serves as cofactor.

The protein localises to the cytoplasm. It carries out the reaction UDP-N-acetyl-alpha-D-muramate + NADP(+) = UDP-N-acetyl-3-O-(1-carboxyvinyl)-alpha-D-glucosamine + NADPH + H(+). It participates in cell wall biogenesis; peptidoglycan biosynthesis. Functionally, cell wall formation. In Wolbachia sp. subsp. Brugia malayi (strain TRS), this protein is UDP-N-acetylenolpyruvoylglucosamine reductase.